The chain runs to 35 residues: N-acylglucosamine 2-epimerase (35 aa).

Residues L1–L21 form a leucine-zipper region.

This sequence belongs to the N-acylglucosamine 2-epimerase family. In terms of assembly, homodimer. Forms a heterodimer with renin and inhibits its activity.

It catalyses the reaction an N-acyl-D-glucosamine = an N-acyl-D-mannosamine. It functions in the pathway amino-sugar metabolism; N-acetylneuraminate degradation. Its function is as follows. Catalyzes the interconversion of N-acetylglucosamine to N-acetylmannosamine. Involved in the N-glycolylneuraminic acid (Neu5Gc) degradation pathway. The chain is N-acylglucosamine 2-epimerase from Canis lupus familiaris (Dog).